Here is a 127-residue protein sequence, read N- to C-terminus: Translation initiation factor 5A (127 aa).

Hypusine is present on Lys-35.

Belongs to the eIF-5A family.

The protein resides in the cytoplasm. In terms of biological role, functions by promoting the formation of the first peptide bond. The sequence is that of Translation initiation factor 5A from Methanococcoides burtonii (strain DSM 6242 / NBRC 107633 / OCM 468 / ACE-M).